Reading from the N-terminus, the 202-residue chain is tRNA (pseudouridine(54)-N(1))-methyltransferase (202 aa).

The S-adenosyl-L-methionine site is built by L130, G152, and C185.

Belongs to the methyltransferase superfamily. TrmY family. In terms of assembly, homodimer.

It is found in the cytoplasm. It catalyses the reaction pseudouridine(54) in tRNA + S-adenosyl-L-methionine = N(1)-methylpseudouridine(54) in tRNA + S-adenosyl-L-homocysteine + H(+). Specifically catalyzes the N1-methylation of pseudouridine at position 54 (Psi54) in tRNAs. The sequence is that of tRNA (pseudouridine(54)-N(1))-methyltransferase from Methanococcoides burtonii (strain DSM 6242 / NBRC 107633 / OCM 468 / ACE-M).